The sequence spans 378 residues: Beta sliding clamp (378 aa).

The protein belongs to the beta sliding clamp family. In terms of assembly, forms a ring-shaped head-to-tail homodimer around DNA which binds and tethers DNA polymerases and other proteins to the DNA. The DNA replisome complex has a single clamp-loading complex (3 tau and 1 each of delta, delta', psi and chi subunits) which binds 3 Pol III cores (1 core on the leading strand and 2 on the lagging strand) each with a beta sliding clamp dimer. Additional proteins in the replisome are other copies of gamma, psi and chi, Ssb, DNA helicase and RNA primase.

It is found in the cytoplasm. Functionally, confers DNA tethering and processivity to DNA polymerases and other proteins. Acts as a clamp, forming a ring around DNA (a reaction catalyzed by the clamp-loading complex) which diffuses in an ATP-independent manner freely and bidirectionally along dsDNA. Initially characterized for its ability to contact the catalytic subunit of DNA polymerase III (Pol III), a complex, multichain enzyme responsible for most of the replicative synthesis in bacteria; Pol III exhibits 3'-5' exonuclease proofreading activity. The beta chain is required for initiation of replication as well as for processivity of DNA replication. This Streptococcus pneumoniae serotype 4 (strain ATCC BAA-334 / TIGR4) protein is Beta sliding clamp (dnaN).